A 303-amino-acid polypeptide reads, in one-letter code: MSVTVTPYDSIPFPDELVALAERSRAADGEPPFSDQTLVDIRSGRAGATCVAATDGDELVGAAVVVPQQDAASTFTVELTVAPGHRDQGVATAIAGQLRAMVDGTVEAWAHGDQPASRRLAELYGLTAVRDLLQLKRTVSGAQDIPLEVSLPQGVRIRPFEVGRDEQAWLHVNSRAFAQHPEQGRITLGDLQEREGQSWFDPRGFLLAVSEQDPDRVLGFHWTKVHPGSGDSPALGEVYAVGVDPEQQGSGLGRALTAAGINHLAQEGLCEVMLYVDADNSAAMALYESLGFERWHVDVMYRS.

N-acetyltransferase domains are found at residues 3-152 and 155-303; these read VTVT…VSLP and VRIR…MYRS. Aspartate 35 is a binding site for 1D-myo-inositol 2-(L-cysteinylamino)-2-deoxy-alpha-D-glucopyranoside. 79–81 is a binding site for acetyl-CoA; sequence LTV. Positions 182, 224, and 237 each coordinate 1D-myo-inositol 2-(L-cysteinylamino)-2-deoxy-alpha-D-glucopyranoside. Residues 241-243 and 248-254 each bind acetyl-CoA; these read VGV and QGSGLGR. Tyrosine 275 provides a ligand contact to 1D-myo-inositol 2-(L-cysteinylamino)-2-deoxy-alpha-D-glucopyranoside.

It belongs to the acetyltransferase family. MshD subfamily. In terms of assembly, monomer.

It carries out the reaction 1D-myo-inositol 2-(L-cysteinylamino)-2-deoxy-alpha-D-glucopyranoside + acetyl-CoA = mycothiol + CoA + H(+). Functionally, catalyzes the transfer of acetyl from acetyl-CoA to desacetylmycothiol (Cys-GlcN-Ins) to form mycothiol. This Kocuria rhizophila (strain ATCC 9341 / DSM 348 / NBRC 103217 / DC2201) protein is Mycothiol acetyltransferase.